Here is a 514-residue protein sequence, read N- to C-terminus: Membrane-bound lytic murein transglycosylase F (514 aa).

An N-terminal signal peptide occupies residues 1–30; sequence MKKLKINYLFIGILTLLLAAALWPSIPWFG. A non-LT domain region spans residues 31-269; the sequence is KTENHIAAIQ…RIEEKYLGHG (239 aa). Residues 270–514 are LT domain; the sequence is DDFDYVDTRS…LFTPQKKEEK (245 aa). The active site involves E314.

In the N-terminal section; belongs to the bacterial solute-binding protein 3 family. The protein in the C-terminal section; belongs to the transglycosylase Slt family.

The protein localises to the cell outer membrane. It catalyses the reaction Exolytic cleavage of the (1-&gt;4)-beta-glycosidic linkage between N-acetylmuramic acid (MurNAc) and N-acetylglucosamine (GlcNAc) residues in peptidoglycan, from either the reducing or the non-reducing ends of the peptidoglycan chains, with concomitant formation of a 1,6-anhydrobond in the MurNAc residue.. Murein-degrading enzyme that degrades murein glycan strands and insoluble, high-molecular weight murein sacculi, with the concomitant formation of a 1,6-anhydromuramoyl product. Lytic transglycosylases (LTs) play an integral role in the metabolism of the peptidoglycan (PG) sacculus. Their lytic action creates space within the PG sacculus to allow for its expansion as well as for the insertion of various structures such as secretion systems and flagella. The chain is Membrane-bound lytic murein transglycosylase F from Salmonella choleraesuis (strain SC-B67).